The following is a 178-amino-acid chain: Thymidine kinase (178 aa).

An ATP-binding site is contributed by 13–20 (GPMFAGKS). The Proton acceptor role is filled by glutamate 85. Residue phenylalanine 115 coordinates substrate. Residues cysteine 140 and cysteine 143 each contribute to the Zn(2+) site. A substrate-binding site is contributed by 159-163 (IEIIG). Residues cysteine 172 and cysteine 175 each contribute to the Zn(2+) site.

It belongs to the thymidine kinase family.

The enzyme catalyses thymidine + ATP = dTMP + ADP + H(+). The protein is Thymidine kinase (TK) of Myxoma virus (strain Uriarra) (MYXV).